An 874-amino-acid chain; its full sequence is Cellulose synthase catalytic subunit [UDP-forming] (874 aa).

Helical transmembrane passes span 30–50, 151–171, 173–193, and 230–250; these read SPFS…VFPL, ILGV…TQPF, PLSQ…VRRM, and LVCG…LVLG. The tract at residues 271 to 364 is catalytic subdomain A; sequence QWPTVDIFVP…FVAIFDCDHV (94 aa). Asp-313 is an active-site residue. Positions 360 and 362 each coordinate substrate. The tract at residues 441 to 501 is catalytic subdomain B; that stretch reads KPLDEIGGIA…GQRIRWARGM (61 aa). The active site involves Asp-457. The next 5 helical transmembrane spans lie at 525–545, 547–567, 592–612, 634–654, and 668–688; these read LNAM…TAPL, FLLL…LFVI, IYET…LINP, VISR…AAGV, and VIVS…AVAV. Positions 694–790 constitute a PilZ domain; that stretch reads QVRRAHRVEI…QHIDFVQCTF (97 aa). Residues 833–853 traverse the membrane as a helical segment; the sequence is SVKVIFRSLTALIAWIVSFIP.

This sequence belongs to the glycosyltransferase 2 family. Mg(2+) is required as a cofactor.

The protein resides in the cell inner membrane. The catalysed reaction is [(1-&gt;4)-beta-D-glucosyl](n) + UDP-alpha-D-glucose = [(1-&gt;4)-beta-D-glucosyl](n+1) + UDP + H(+). It functions in the pathway glycan metabolism; bacterial cellulose biosynthesis. Activated by bis-(3'-5') cyclic diguanylic acid (c-di-GMP). Its function is as follows. Catalytic subunit of cellulose synthase. It polymerizes uridine 5'-diphosphate glucose to cellulose, which is produced as an extracellular component for mechanical and chemical protection at the onset of the stationary phase, when the cells exhibit multicellular behavior (rdar morphotype). Coexpression of cellulose and thin aggregative fimbriae leads to a hydrophobic network with tightly packed cells embedded in a highly inert matrix. This is Cellulose synthase catalytic subunit [UDP-forming] (bcsA) from Salmonella typhi.